The sequence spans 403 residues: Leu/Ile/Val-binding protein homolog 8 (403 aa).

An N-terminal signal peptide occupies residues Met1–Ala26.

The protein belongs to the leucine-binding protein family.

In terms of biological role, component of an amino-acid transport system. This is Leu/Ile/Val-binding protein homolog 8 from Brucella abortus (strain 2308).